Here is a 380-residue protein sequence, read N- to C-terminus: MQDILLIKYGELALKGDNRSFFENKLIKNIKHALSDFKEVKVEKTHGRIYVECDGDIEEVIERLKKVFGIVGITKAKKTDLNLDEIFKAAVELMKGHEGKTFKVETKRPNKSFPYNSMEVSRRVGAAVLKNIKNLKVDVHNPDVLLNVEIREMAFVYAGVIEGIGGLPLGTNGKATVLLSGGIDSPVAAWMMMKRGVEVEAVYFHSPPYTSERAKDKVVDLCKVLSQYGQRIKLHVVHFTDLQLEIYEKCPPKFTTIIMRRMMMKIAEKIAQKNGSMALITGESLGQVASQTIESLYVTNASVSMPIFRPLIGMDKTEIIDLAQKISTFEISIRPYEDCCTIFVPKHPATKPKLDKVIEAEEKMEYQKYIDDFEEEVIEV.

One can recognise a THUMP domain in the interval 58 to 162 (EEVIERLKKV…MAFVYAGVIE (105 aa)). Residues 178–179 (LL), 203–204 (YF), Arg-260, Gly-282, and Gln-291 each bind ATP.

Belongs to the ThiI family.

The protein resides in the cytoplasm. It carries out the reaction [ThiI sulfur-carrier protein]-S-sulfanyl-L-cysteine + a uridine in tRNA + 2 reduced [2Fe-2S]-[ferredoxin] + ATP + H(+) = [ThiI sulfur-carrier protein]-L-cysteine + a 4-thiouridine in tRNA + 2 oxidized [2Fe-2S]-[ferredoxin] + AMP + diphosphate. The catalysed reaction is [ThiS sulfur-carrier protein]-C-terminal Gly-Gly-AMP + S-sulfanyl-L-cysteinyl-[cysteine desulfurase] + AH2 = [ThiS sulfur-carrier protein]-C-terminal-Gly-aminoethanethioate + L-cysteinyl-[cysteine desulfurase] + A + AMP + 2 H(+). It participates in cofactor biosynthesis; thiamine diphosphate biosynthesis. Its function is as follows. Catalyzes the ATP-dependent transfer of a sulfur to tRNA to produce 4-thiouridine in position 8 of tRNAs, which functions as a near-UV photosensor. Also catalyzes the transfer of sulfur to the sulfur carrier protein ThiS, forming ThiS-thiocarboxylate. This is a step in the synthesis of thiazole, in the thiamine biosynthesis pathway. The sulfur is donated as persulfide by IscS. The protein is Probable tRNA sulfurtransferase of Thermoanaerobacter pseudethanolicus (strain ATCC 33223 / 39E) (Clostridium thermohydrosulfuricum).